A 182-amino-acid polypeptide reads, in one-letter code: uncharacterized protein (182 aa).

Transmembrane regions (helical) follow at residues 29–49 (IISG…AGLP) and 63–83 (FYFP…MLTL).

Its subcellular location is the cell membrane. This is an uncharacterized protein from Ureaplasma parvum serovar 3 (strain ATCC 700970).